An 85-amino-acid chain; its full sequence is MIYTDPATGATTNTDAAGNNYLNRLTPNTFLIILAVVVIVALIIIFMQSSSNGNNSSSPAAVPQMGFPLNTTMRANPFVATPQRL.

The protein resides in the virion membrane. Its function is as follows. Component of the polyhedra envelope. This is Occlusion-derived virus envelope protein E18 from Orgyia pseudotsugata (Douglas-fir tussock moth).